We begin with the raw amino-acid sequence, 280 residues long: Fructose-1,6-bisphosphatase class 1 (280 aa).

Residues E64, D83, L85, and D86 each contribute to the Mg(2+) site. Substrate contacts are provided by residues 86–89 (DGSS), Y190, and K221. E227 is a Mg(2+) binding site.

The protein belongs to the FBPase class 1 family. In terms of assembly, homotetramer. It depends on Mg(2+) as a cofactor.

The protein resides in the cytoplasm. The catalysed reaction is beta-D-fructose 1,6-bisphosphate + H2O = beta-D-fructose 6-phosphate + phosphate. Its pathway is carbohydrate biosynthesis; gluconeogenesis. The polypeptide is Fructose-1,6-bisphosphatase class 1 (Campylobacter hominis (strain ATCC BAA-381 / DSM 21671 / CCUG 45161 / LMG 19568 / NCTC 13146 / CH001A)).